A 223-amino-acid chain; its full sequence is Thylakoid lumenal 15.0 kDa protein 2, chloroplastic (223 aa).

It is found in the plastid. The protein localises to the chloroplast thylakoid lumen. The chain is Thylakoid lumenal 15.0 kDa protein 2, chloroplastic from Arabidopsis thaliana (Mouse-ear cress).